Consider the following 530-residue polypeptide: UDP-glucuronosyltransferase 1A8 (530 aa).

Positions 1–25 are cleaved as a signal peptide; sequence MARTGWTSPIPLCVSLLLTCGFAEA. Asparagine 71, asparagine 292, and asparagine 344 each carry an N-linked (GlcNAc...) asparagine glycan. The chain crosses the membrane as a helical span at residues 488 to 504; the sequence is VIGFLLAVVLTVAFITF.

This sequence belongs to the UDP-glycosyltransferase family. In terms of assembly, homodimer. Homooligomer. Interacts with UGT1A1, UGT1A3, UGT1A4, UGT1A6, UGT1A7, UGT1A9 and UGT1A10 to form heterodimers. Isoform 1 interacts with isoform 2/i2 suggesting that oligomerization is involved in negative regulation of transferase activity by isoform 2. Isoform 1 also interacts with respective i2 isoforms of UGT1A1, UGT1A3, UGT1A4, UGT1A6, UGT1A7, UGT1A9 and UGT1A10. Expressed in kidney, colon and small intestine. Not expressed in liver. In terms of tissue distribution, expressed in liver, kidney, colon and small intestine.

The protein localises to the endoplasmic reticulum membrane. It catalyses the reaction glucuronate acceptor + UDP-alpha-D-glucuronate = acceptor beta-D-glucuronoside + UDP + H(+). The catalysed reaction is 17beta-estradiol + UDP-alpha-D-glucuronate = 17beta-estradiol 3-O-(beta-D-glucuronate) + UDP + H(+). The enzyme catalyses 17alpha-estradiol + UDP-alpha-D-glucuronate = 17alpha-estradiol 3-O-(beta-D-glucuronate) + UDP + H(+). It carries out the reaction estrone + UDP-alpha-D-glucuronate = estrone 3-O-(beta-D-glucuronate) + UDP + H(+). It catalyses the reaction 16alpha,17alpha-estriol + UDP-alpha-D-glucuronate = 16alpha,17alpha-estriol 3-O-(beta-D-glucuronate) + UDP + H(+). The catalysed reaction is 2-hydroxy-17beta-estradiol + UDP-alpha-D-glucuronate = 2-hydroxy-17beta-estradiol 3-O-(beta-D-glucuronate) + UDP + H(+). The enzyme catalyses 2-hydroxy-17beta-estradiol + UDP-alpha-D-glucuronate = 17beta-estradiol 2-O-(beta-D-glucuronate) + UDP + H(+). It carries out the reaction 2-hydroxyestrone + UDP-alpha-D-glucuronate = 2-hydroxyestrone 3-O-(beta-D-glucuronate) + UDP + H(+). It catalyses the reaction 4-hydroxy-17beta-estradiol + UDP-alpha-D-glucuronate = 4-hydroxy-17beta-estradiol 3-O-(beta-D-glucuronate) + UDP + H(+). The catalysed reaction is 4-hydroxy-17beta-estradiol + UDP-alpha-D-glucuronate = 17beta-estradiol 4-O-(beta-D-glucuronate) + UDP + H(+). The enzyme catalyses 4-hydroxyestrone + UDP-alpha-D-glucuronate = 4-hydroxyestrone 3-O-(beta-D-glucuronate) + UDP + H(+). It carries out the reaction 4-hydroxyestrone + UDP-alpha-D-glucuronate = estrone 4-O-(beta-D-glucuronate) + UDP + H(+). It catalyses the reaction 2-methoxy-17beta-estradiol + UDP-alpha-D-glucuronate = 2-methoxy-17beta-estradiol 3-O-(beta-D-glucuronate) + UDP + H(+). The catalysed reaction is 2-methoxyestrone + UDP-alpha-D-glucuronate = 2-methoxyestrone 3-O-(beta-D-glucuronate) + UDP + H(+). The enzyme catalyses 4-methoxy-17beta-estradiol + UDP-alpha-D-glucuronate = 4-methoxy-17beta-estradiol 3-O-(beta-D-glucuronate) + UDP + H(+). It carries out the reaction 4-methoxyestrone + UDP-alpha-D-glucuronate = 4-methoxyestrone 3-O-(beta-D-glucuronate) + UDP + H(+). It catalyses the reaction 17beta-hydroxy-5alpha-androstan-3-one + UDP-alpha-D-glucuronate = 5alpha-dihydrotestosterone 17-O-(beta-D-glucuronate) + UDP + H(+). The catalysed reaction is 5alpha-dihydrotestosterone 17-O-(beta-D-glucuronate) + UDP-alpha-D-glucuronate = 5alpha-dihydrotestosterone 17-O-[beta-D-glucuronosyl-(1-&gt;2)-glucuronate] + UDP + H(+). The enzyme catalyses prunetin + UDP-alpha-D-glucuronate = prunetin-4'-O-beta-D-glucuronide + UDP. It carries out the reaction prunetin + UDP-alpha-D-glucuronate = prunetin-5-O-beta-D-glucuronide + UDP. It catalyses the reaction candesartan + UDP-alpha-D-glucuronate = candesartan O-beta-D-glucuronoside + UDP. The catalysed reaction is mycophenolate + UDP-alpha-D-glucuronate = mycophenolate 7-O-beta-D-glucuronide + UDP + H(+). The enzyme catalyses (E)-ferulate + UDP-alpha-D-glucuronate = (E)-4-O-(beta-D-glucuronosyl)-ferulate + UDP + H(+). It carries out the reaction (E)-ferulate + UDP-alpha-D-glucuronate = (E)-ferulic acid beta-D-glucuronate ester + UDP. Functionally, UDP-glucuronosyltransferase (UGT) that catalyzes phase II biotransformation reactions in which lipophilic substrates are conjugated with glucuronic acid to increase the metabolite's water solubility, thereby facilitating excretion into either the urine or bile. Essential for the elimination and detoxification of drugs, xenobiotics and endogenous compounds. Catalyzes the glucuronidation of endogenous steroid hormones such as androgens and estrogens. Produces dihydrotestosterone (DHT) diglucuronide from the DHT after two subsequent glucoronidation steps. Involved in the glucuronidation of the phytochemical ferulic acid at the phenolic or the carboxylic acid group. Also catalyzes the glucuronidation of the isoflavones genistein, daidzein, glycitein, formononetin, biochanin A and prunetin, which are phytoestrogens with anticancer and cardiovascular properties. Involved in the glucuronidation of the AGTR1 angiotensin receptor antagonist caderastan, a drug which can inhibit the effect of angiotensin II. Also metabolizes mycophenolate, an immunosuppressive agent. Its function is as follows. Lacks UGT glucuronidation activity but acts as a negative regulator of isoform 1. The protein is UDP-glucuronosyltransferase 1A8 of Homo sapiens (Human).